A 419-amino-acid chain; its full sequence is MNGSGSGIRTRRTAVTGIGVVAPNGLHADTYWKSVKEGASVLDRITREGCEHLPLRVAGEVRGFDPSALIEETFLVQTDLFTHFALAAADAALQDAGLTKAAAVADSPYSVGVVTAAGSGGGEFGQRELQKLWGQGSRFVGPYQSIAWFYAASTGQISIRSGFKGPCGVVASDEAGGLDAVAHAARVVERGTDVVVVGAAEAPLAPYSMVCQLGYPELSTDEDPAIAYRPFTSAARGFVPAEGGAVLIVEEADRAHRRGAVVRATVAGHAATFTGASHWDQSREGLAHAIHGALDEAGCAPEEIDVVFADAMGVPEADRAEALALVDALGRHAPRVPVTAPKTGIGRSYCGAALLDIAAGAGMEHGQIPPTPNVFDICHQIDLVTATARPASSAPLVLSRGLMGSNAALVLRPGPGSTA.

A Ketosynthase family 3 (KS3) domain is found at 10–413; sequence TRRTAVTGIG…GSNAALVLRP (404 aa).

Belongs to the thiolase-like superfamily. Beta-ketoacyl-ACP synthases family.

It participates in antibiotic biosynthesis; curamycin biosynthesis. This chain is Putative polyketide beta-ketoacyl synthase 2 (curB), found in Streptomyces cyaneus (Streptomyces curacoi).